The sequence spans 51 residues: Large ribosomal subunit protein eL39 (51 aa).

It belongs to the eukaryotic ribosomal protein eL39 family.

The polypeptide is Large ribosomal subunit protein eL39 (RpL39) (Plutella xylostella (Diamondback moth)).